Consider the following 371-residue polypeptide: Probable diguanylate cyclase DgcC (371 aa).

5 consecutive transmembrane segments (helical) span residues 46–66 (AVGLAGMFLPIASTLVSHPPP), 68–88 (WWWLVLVGWAFVWPHLAWQIA), 112–132 (WVGVMGVNVLPSTAMLMIMCL), 143–163 (FVAGLVLMVVSCLVTLELTGI), and 171–191 (PLEWWLSLPIIVIYPLLFGWV). The GGDEF domain maps to 240–371 (RDATLLIIDI…AGRNRTEVAA (132 aa)). Mg(2+) contacts are provided by D248 and I249. N256 and D265 together coordinate substrate. D291 lines the Mg(2+) pocket.

It depends on Mg(2+) as a cofactor.

The protein localises to the cell inner membrane. The enzyme catalyses 2 GTP = 3',3'-c-di-GMP + 2 diphosphate. The protein operates within purine metabolism; 3',5'-cyclic di-GMP biosynthesis. A probable diguanylate cyclase. The last member of a cascade of expressed proteins, its expression requires DgcM. DgcC production induces biosynthesis of cellulose in some E.coli isolates, but not in K12 strains. Cyclic-di-GMP is a second messenger which controls cell surface-associated traits in bacteria. The chain is Probable diguanylate cyclase DgcC from Escherichia coli (strain K12).